The sequence spans 235 residues: Segregation and condensation protein A (235 aa).

It belongs to the ScpA family. In terms of assembly, component of a cohesin-like complex composed of ScpA, ScpB and the Smc homodimer, in which ScpA and ScpB bind to the head domain of Smc. The presence of the three proteins is required for the association of the complex with DNA.

It is found in the cytoplasm. Functionally, participates in chromosomal partition during cell division. May act via the formation of a condensin-like complex containing Smc and ScpB that pull DNA away from mid-cell into both cell halves. In Streptococcus equi subsp. zooepidemicus (strain MGCS10565), this protein is Segregation and condensation protein A.